Here is a 175-residue protein sequence, read N- to C-terminus: Crossover junction endodeoxyribonuclease RuvC (175 aa).

Active-site residues include Asp16, Glu76, and Asp148. Mg(2+) contacts are provided by Asp16, Glu76, and Asp148.

It belongs to the RuvC family. Homodimer which binds Holliday junction (HJ) DNA. The HJ becomes 2-fold symmetrical on binding to RuvC with unstacked arms; it has a different conformation from HJ DNA in complex with RuvA. In the full resolvosome a probable DNA-RuvA(4)-RuvB(12)-RuvC(2) complex forms which resolves the HJ. It depends on Mg(2+) as a cofactor.

It localises to the cytoplasm. The catalysed reaction is Endonucleolytic cleavage at a junction such as a reciprocal single-stranded crossover between two homologous DNA duplexes (Holliday junction).. In terms of biological role, the RuvA-RuvB-RuvC complex processes Holliday junction (HJ) DNA during genetic recombination and DNA repair. Endonuclease that resolves HJ intermediates. Cleaves cruciform DNA by making single-stranded nicks across the HJ at symmetrical positions within the homologous arms, yielding a 5'-phosphate and a 3'-hydroxyl group; requires a central core of homology in the junction. The consensus cleavage sequence is 5'-(A/T)TT(C/G)-3'. Cleavage occurs on the 3'-side of the TT dinucleotide at the point of strand exchange. HJ branch migration catalyzed by RuvA-RuvB allows RuvC to scan DNA until it finds its consensus sequence, where it cleaves and resolves the cruciform DNA. The sequence is that of Crossover junction endodeoxyribonuclease RuvC from Bradyrhizobium sp. (strain ORS 278).